The sequence spans 300 residues: Protoheme IX farnesyltransferase (300 aa).

Helical transmembrane passes span 31–51 (VMSL…NSLH), 52–72 (PFIS…AGAI), 92–112 (IVRG…MAFF), 123–145 (FLSA…MWLK), 152–172 (IVIG…SVSG), 179–199 (VILF…LALF), 225–245 (ILIY…VGMS), 247–267 (IIYL…SISL), and 280–300 (FFAY…FCRV).

The protein belongs to the UbiA prenyltransferase family. Protoheme IX farnesyltransferase subfamily.

The protein localises to the cell inner membrane. It catalyses the reaction heme b + (2E,6E)-farnesyl diphosphate + H2O = Fe(II)-heme o + diphosphate. It functions in the pathway porphyrin-containing compound metabolism; heme O biosynthesis; heme O from protoheme: step 1/1. Its function is as follows. Converts heme B (protoheme IX) to heme O by substitution of the vinyl group on carbon 2 of heme B porphyrin ring with a hydroxyethyl farnesyl side group. The chain is Protoheme IX farnesyltransferase from Rickettsia bellii (strain OSU 85-389).